The chain runs to 429 residues: Glutamate--tRNA ligase 1 (429 aa).

The 'HIGH' region motif lies at 6–16 (PSPTGDMHIGN). The 'KMSKS' region signature appears at 235-239 (KMSKR). Lysine 238 provides a ligand contact to ATP.

This sequence belongs to the class-I aminoacyl-tRNA synthetase family. Glutamate--tRNA ligase type 1 subfamily. As to quaternary structure, monomer.

It is found in the cytoplasm. The enzyme catalyses tRNA(Glu) + L-glutamate + ATP = L-glutamyl-tRNA(Glu) + AMP + diphosphate. In terms of biological role, catalyzes the attachment of glutamate to tRNA(Glu) in a two-step reaction: glutamate is first activated by ATP to form Glu-AMP and then transferred to the acceptor end of tRNA(Glu). The polypeptide is Glutamate--tRNA ligase 1 (Campylobacter fetus subsp. fetus (strain 82-40)).